The chain runs to 300 residues: MAETPRLLFVHAHPDDESLGTGATIAHYTAAGADVRVVTCTLGEEGEVIGERWAELAVDRADQLGGYRIGELTAALRELGVGEPCYLGGAGRWRDSGMPGTPKRRRQRFIDADEREAVGALVAVIREQRPHVVVGYDPAGGYGHPDHVHVHTVTTAAVAAAGAGDFPGEPWAVPKFYWSVFATRPFEAAVQALTPEDLRPDWSMPSAEQFTFGYADDHIDAVVAAGPHAWAAKRAALAAHATQVVVGPTGRACALSNNVALPILDEEHYVLVAGAAGARDERGWETDLLAGLEFGAAPRR.

Histidine 13, aspartate 16, and histidine 147 together coordinate Zn(2+).

Belongs to the MshB deacetylase family. Zn(2+) is required as a cofactor.

It carries out the reaction 1D-myo-inositol 2-acetamido-2-deoxy-alpha-D-glucopyranoside + H2O = 1D-myo-inositol 2-amino-2-deoxy-alpha-D-glucopyranoside + acetate. Its function is as follows. Catalyzes the deacetylation of 1D-myo-inositol 2-acetamido-2-deoxy-alpha-D-glucopyranoside (GlcNAc-Ins) in the mycothiol biosynthesis pathway. The sequence is that of 1D-myo-inositol 2-acetamido-2-deoxy-alpha-D-glucopyranoside deacetylase from Mycobacterium avium (strain 104).